Reading from the N-terminus, the 69-residue chain is uncharacterized protein (69 aa).

A disordered region spans residues 21–42; sequence MYAANKKSDARRRGKVGKEQWE. Residues 35-69 adopt a coiled-coil conformation; sequence KVGKEQWEKEMEQYNIQKAQFEKELKEKKEKELKK.

This is an uncharacterized protein from Acheta domesticus (House cricket).